Here is a 517-residue protein sequence, read N- to C-terminus: Glycosyltransferase family 92 protein F55C10.4 (517 aa).

A helical transmembrane segment spans residues 9-31; that stretch reads FLKYFIIFTFFCVTFCFLKLCLG. The 299-residue stretch at 156-454 folds into the GT92 domain; it reads KPVIFCVSPQ…FKCYNESFYH (299 aa).

The protein belongs to the glycosyltransferase 92 family.

It localises to the membrane. This Caenorhabditis elegans protein is Glycosyltransferase family 92 protein F55C10.4.